Reading from the N-terminus, the 491-residue chain is GTPase Der (491 aa).

The EngA-type G 1 domain occupies 3-178 (AKIALVGRPN…EMRDLLPEED (176 aa)). Residues 9–16 (GRPNVGKS), 57–61 (DTGGI), and 130–133 (NKVD) each bind GTP. The span at 198-224 (DAETEDGASASETEEDITEETVEDEPE) shows a compositional bias: acidic residues. A disordered region spans residues 198–225 (DAETEDGASASETEEDITEETVEDEPEA). Positions 227-400 (LRLCMLGRPN…LAARIRRECS (174 aa)) constitute an EngA-type G 2 domain. GTP-binding positions include 233–240 (GRPNAGKS), 280–284 (DTAGV), and 345–348 (NKMD). A KH-like domain is found at 401–485 (VRIPTGQLNR…PMRVHFRSSH (85 aa)).

Belongs to the TRAFAC class TrmE-Era-EngA-EngB-Septin-like GTPase superfamily. EngA (Der) GTPase family. In terms of assembly, associates with the 50S ribosomal subunit.

Functionally, GTPase that plays an essential role in the late steps of ribosome biogenesis. The polypeptide is GTPase Der (Nitratidesulfovibrio vulgaris (strain ATCC 29579 / DSM 644 / CCUG 34227 / NCIMB 8303 / VKM B-1760 / Hildenborough) (Desulfovibrio vulgaris)).